The sequence spans 272 residues: Undecaprenyl-diphosphatase (272 aa).

7 helical membrane-spanning segments follow: residues 42–62 (FGLS…VVFF), 92–112 (YLVL…EDFF), 120–140 (WVVV…EAVG), 149–169 (MGFA…VPGV), 194–214 (FLMS…EVLA), 224–244 (MFAV…RFFI), and 252–272 (LRAF…LLLL).

It belongs to the UppP family.

The protein localises to the cell membrane. It catalyses the reaction di-trans,octa-cis-undecaprenyl diphosphate + H2O = di-trans,octa-cis-undecaprenyl phosphate + phosphate + H(+). Its function is as follows. Catalyzes the dephosphorylation of undecaprenyl diphosphate (UPP). Confers resistance to bacitracin. This chain is Undecaprenyl-diphosphatase, found in Rubrobacter xylanophilus (strain DSM 9941 / JCM 11954 / NBRC 16129 / PRD-1).